The sequence spans 278 residues: Energy-coupling factor transporter ATP-binding protein EcfA1 (278 aa).

Positions 5–239 (LLLESVSYQY…QDKLEAAGID (235 aa)) constitute an ABC transporter domain. Residue 39 to 46 (GPNGSGKS) coordinates ATP.

It belongs to the ABC transporter superfamily. Energy-coupling factor EcfA family. As to quaternary structure, forms a stable energy-coupling factor (ECF) transporter complex composed of 2 membrane-embedded substrate-binding proteins (S component), 2 ATP-binding proteins (A component) and 2 transmembrane proteins (T component).

It localises to the cell membrane. Functionally, ATP-binding (A) component of a common energy-coupling factor (ECF) ABC-transporter complex. Unlike classic ABC transporters this ECF transporter provides the energy necessary to transport a number of different substrates. The protein is Energy-coupling factor transporter ATP-binding protein EcfA1 of Halalkalibacterium halodurans (strain ATCC BAA-125 / DSM 18197 / FERM 7344 / JCM 9153 / C-125) (Bacillus halodurans).